The sequence spans 477 residues: Argininosuccinate lyase (477 aa).

This sequence belongs to the lyase 1 family. Argininosuccinate lyase subfamily.

The protein localises to the cytoplasm. The enzyme catalyses 2-(N(omega)-L-arginino)succinate = fumarate + L-arginine. It participates in amino-acid biosynthesis; L-arginine biosynthesis; L-arginine from L-ornithine and carbamoyl phosphate: step 3/3. This is Argininosuccinate lyase from Acinetobacter baumannii (strain AB307-0294).